A 188-amino-acid polypeptide reads, in one-letter code: dCTP deaminase (188 aa).

Residues 111–116 (KSTYAR), 135–137 (TLE), Gln-156, Tyr-170, Lys-179, and Gln-180 contribute to the dCTP site. Catalysis depends on Glu-137, which acts as the Proton donor/acceptor.

This sequence belongs to the dCTP deaminase family. In terms of assembly, homotrimer.

The catalysed reaction is dCTP + H2O + H(+) = dUTP + NH4(+). The protein operates within pyrimidine metabolism; dUMP biosynthesis; dUMP from dCTP (dUTP route): step 1/2. Its function is as follows. Catalyzes the deamination of dCTP to dUTP. The sequence is that of dCTP deaminase from Rickettsia akari (strain Hartford).